Reading from the N-terminus, the 180-residue chain is Large ribosomal subunit protein uL5 (180 aa).

This sequence belongs to the universal ribosomal protein uL5 family. In terms of assembly, part of the 50S ribosomal subunit; part of the 5S rRNA/L5/L18/L25 subcomplex. Contacts the 5S rRNA and the P site tRNA. Forms a bridge to the 30S subunit in the 70S ribosome.

This is one of the proteins that bind and probably mediate the attachment of the 5S RNA into the large ribosomal subunit, where it forms part of the central protuberance. In the 70S ribosome it contacts protein S13 of the 30S subunit (bridge B1b), connecting the 2 subunits; this bridge is implicated in subunit movement. Contacts the P site tRNA; the 5S rRNA and some of its associated proteins might help stabilize positioning of ribosome-bound tRNAs. The chain is Large ribosomal subunit protein uL5 from Clostridium botulinum (strain Loch Maree / Type A3).